We begin with the raw amino-acid sequence, 245 residues long: Carboxy-S-adenosyl-L-methionine synthase (245 aa).

Residues Y42, 67-69 (GCS), 92-93 (DN), 120-121 (DI), N135, and R202 contribute to the S-adenosyl-L-methionine site.

This sequence belongs to the class I-like SAM-binding methyltransferase superfamily. Cx-SAM synthase family. As to quaternary structure, homodimer.

The enzyme catalyses prephenate + S-adenosyl-L-methionine = carboxy-S-adenosyl-L-methionine + 3-phenylpyruvate + H2O. In terms of biological role, catalyzes the conversion of S-adenosyl-L-methionine (SAM) to carboxy-S-adenosyl-L-methionine (Cx-SAM). The polypeptide is Carboxy-S-adenosyl-L-methionine synthase (Vibrio parahaemolyticus serotype O3:K6 (strain RIMD 2210633)).